A 284-amino-acid chain; its full sequence is Glutamate 5-kinase 2 (284 aa).

Residue K26 participates in ATP binding. Positions 67, 154, and 166 each coordinate substrate. Residues 186–187 (SD) and 228–234 (SGGMVTK) each bind ATP.

The protein belongs to the glutamate 5-kinase family.

The protein localises to the cytoplasm. It carries out the reaction L-glutamate + ATP = L-glutamyl 5-phosphate + ADP. It functions in the pathway amino-acid biosynthesis; L-proline biosynthesis; L-glutamate 5-semialdehyde from L-glutamate: step 1/2. In terms of biological role, catalyzes the transfer of a phosphate group to glutamate to form L-glutamate 5-phosphate. The chain is Glutamate 5-kinase 2 from Mesorhizobium japonicum (strain LMG 29417 / CECT 9101 / MAFF 303099) (Mesorhizobium loti (strain MAFF 303099)).